Consider the following 102-residue polypeptide: Acid shock protein (102 aa).

The N-terminal stretch at 1–21 (MKKVLALVVAAAMGLSSAAFA) is a signal peptide. The span at 22–41 (AETATTPAPTATTTKAAPAK) shows a compositional bias: low complexity. The propeptide occupies 22–58 (AETATTPAPTATTTKAAPAKTTHHKKQHKAAPAQKAQ). Residues 22-102 (AETATTPAPT…PAKPAAQPAA (81 aa)) form a disordered region. The span at 80-90 (AAKKHARKHSH) shows a compositional bias: basic residues. The span at 91 to 102 (QQPAKPAAQPAA) shows a compositional bias: low complexity.

The protein belongs to the Asr family. In terms of processing, proteolytic processing gives rise to the active protein.

The protein localises to the periplasm. Required for growth and/or survival at acidic conditions. This Escherichia coli O127:H6 (strain E2348/69 / EPEC) protein is Acid shock protein.